Here is a 1186-residue protein sequence, read N- to C-terminus: Myelin transcription factor 1-like protein (1186 aa).

The interval 1–21 is disordered; it reads MEVDTEEKRHRTRSKGVRVPV. A CCHHC-type 1 zinc finger spans residues 22–65; it reads EPAIQELFSCPTPGCDGSGHVSGKYARHRSVYGCPLAKKRKTQD. The Zn(2+) site is built by Cys-31, Cys-36, His-49, and Cys-55. Disordered regions lie at residues 56–175 and 220–247; these read PLAK…QMNC and RTES…GRKS. The segment covering 86-169 has biased composition (acidic residues); it reads SVDECDDSDG…EEEEEEEENE (84 aa). Ser-250 carries the post-translational modification Phosphoserine. Disordered regions lie at residues 342 to 372 and 449 to 513; these read SETN…GRTP and REKM…GCDG. The segment covering 343-357 has biased composition (polar residues); it reads ETNPQERNPQQNMNI. Basic and acidic residues-rich tracts occupy residues 361 to 372, 449 to 487, and 495 to 505; these read VRPEEDFPGRTP, REKM…DSHV, and DPSRTEKKESK. 2 consecutive CCHHC-type zinc fingers follow at residues 497–540 and 541–584; these read SRTE…PPEI and LAMH…KLAK. Cys-506, Cys-511, His-524, Cys-530, Cys-550, Cys-555, His-568, and Cys-574 together coordinate Zn(2+). Disordered regions lie at residues 659-709 and 753-780; these read RAIA…GGGS and KPQD…MNKQ. Over residues 666 to 683 the composition is skewed to basic and acidic residues; sequence QTRDISPKGYDDAKRYCK. The segment covering 685–709 has biased composition (low complexity); the sequence is PSPSSSSTSSYAPSSSSNLSCGGGS. 3 consecutive CCHHC-type zinc fingers follow at residues 896–939, 945–988, and 998–1041; these read LATS…GIRI, DKED…QKDG, and KSVK…MKKA. 12 residues coordinate Zn(2+): Cys-905, Cys-910, His-923, Cys-929, Cys-954, Cys-959, His-972, Cys-978, Cys-1007, Cys-1012, His-1025, and Cys-1031. The stretch at 1056–1130 forms a coiled coil; that stretch reads SNGIENDEEI…LANLSQSLIH (75 aa).

This sequence belongs to the MYT1 family. As to quaternary structure, interacts with SIN3B.

It is found in the nucleus. The protein localises to the chromosome. Functionally, transcription factor that plays a key role in neuronal differentiation by specifically repressing expression of non-neuronal genes during neuron differentiation. In contrast to other transcription repressors that inhibit specific lineages, mediates repression of multiple differentiation programs. Also represses expression of negative regulators of neurogenesis, such as members of the Notch signaling pathway, including HES1. The combination of three transcription factors, ASCL1, POU3F2/BRN2 and MYT1L, is sufficient to reprogram fibroblasts and other somatic cells into induced neuronal (iN) cells in vitro. Directly binds the 5'-AAGTT-3' core motif present on the promoter of target genes and represses transcription by recruiting a multiprotein complex containing SIN3B. The 5'-AAGTT-3' core motif is absent from the promoter of neural genes. This is Myelin transcription factor 1-like protein from Homo sapiens (Human).